A 305-amino-acid chain; its full sequence is Olfactory receptor 4F4 (305 aa).

Topologically, residues 1–18 (MVTEFIFLGLSDSQELQT) are extracellular. The helical transmembrane segment at 19-42 (FLFMLFFVFYGGIVFGNLLIVITV) threads the bilayer. Residues 43–50 (VSDSHLHS) lie on the Cytoplasmic side of the membrane. The helical transmembrane segment at 51 to 72 (PMYFLLANLSLIDLSLSSVTAP) threads the bilayer. The Extracellular portion of the chain corresponds to 73–93 (KMITDFFSQRKVISFKGCLVQ). Cys-90 and Cys-182 form a disulfide bridge. The chain crosses the membrane as a helical span at residues 94 to 113 (IFLLHFFGGSEMVILIAMGF). Over 114–132 (DRYIAICKPLHYTTIMCGN) the chain is Cytoplasmic. Residues 133 to 151 (ACVGIMAVAWGIGFLHSVS) traverse the membrane as a helical segment. The Extracellular portion of the chain corresponds to 152–188 (QLAFAVHLPFCGPNEVDSFYCDLPRVIKLACTDTYRL). Residues 189-212 (DIMVIANSGVLTVCSFVLLIISYT) form a helical membrane-spanning segment. Residues 213–228 (IILMTIQHCPLDKSSK) are Cytoplasmic-facing. A helical membrane pass occupies residues 229 to 251 (ALSTLTAHITVVLLFFGPCVFIY). The Extracellular segment spans residues 252-262 (AWPFPIKSLDK). The chain crosses the membrane as a helical span at residues 263 to 282 (FLAVFYSVITPLLNPIIYTL). Topologically, residues 283-305 (RNKDMKTAIRRLRKWDAHSSVKF) are cytoplasmic.

It belongs to the G-protein coupled receptor 1 family.

The protein localises to the cell membrane. Its function is as follows. Odorant receptor. The polypeptide is Olfactory receptor 4F4 (OR4F4) (Homo sapiens (Human)).